Consider the following 230-residue polypeptide: Prepilin leader peptidase/N-methyltransferase (230 aa).

7 consecutive transmembrane segments (helical) span residues 1 to 21 (MIYF…WFYL), 60 to 80 (GHIL…QIAF), 84 to 104 (IFTV…YLDW), 114 to 134 (CLWL…LLTL), 140 to 160 (SAAS…FYYG), 181 to 201 (LETL…FSLI), and 208 to 228 (FLPF…VKYY).

Belongs to the peptidase A24 family.

Its subcellular location is the cell inner membrane. It carries out the reaction Typically cleaves a -Gly-|-Phe- bond to release an N-terminal, basic peptide of 5-8 residues from type IV prepilin, and then N-methylates the new N-terminal amino group, the methyl donor being S-adenosyl-L-methionine.. Plays a role in type II pseudopili formation by proteolytically removing the leader sequence from substrate proteins and subsequently monomethylating the alpha-amino group of the newly exposed N-terminal phenylalanine. Substrates include proteins required for biogenesis of the type II general secretory apparatus. This is Prepilin leader peptidase/N-methyltransferase (hofD) from Haemophilus influenzae (strain ATCC 51907 / DSM 11121 / KW20 / Rd).